The primary structure comprises 279 residues: Cholesterol 25-hydroxylase-like protein 2 (279 aa).

N-linked (GlcNAc...) asparagine glycans are attached at residues N6 and N13. A run of 3 transmembrane segments spans residues 36–56 (LFPV…YTVL), 86–106 (LALT…AQWL), and 120–140 (LTAF…QYYL). The 135-residue stretch at 128–262 (VGCTVVFDFQ…FAHWDWLGGT (135 aa)) folds into the Fatty acid hydroxylase domain. A Histidine box-1 motif is present at residues 141-145 (WHLLH). The Histidine box-2 signature appears at 156–160 (HALHH). A run of 2 transmembrane segments spans residues 165 to 185 (TFSL…GFWT) and 189 to 209 (PLLL…NIWV). The short motif at 237–243 (RHDAHHQ) is the Histidine box-3 element.

Belongs to the sterol desaturase family. It depends on Fe cation as a cofactor.

The protein localises to the endoplasmic reticulum membrane. In terms of biological role, may catalyze the formation of 25-hydroxycholesterol from cholesterol. In Danio rerio (Zebrafish), this protein is Cholesterol 25-hydroxylase-like protein 2.